The following is a 327-amino-acid chain: Zinc transport protein ZntB (327 aa).

Topologically, residues 1–273 (MEAIKGSEVN…ARRTYTMSLM (273 aa)) are cytoplasmic. The helical transmembrane segment at 274 to 294 (AMVFLPSTFLTGLFGVNLGGI) threads the bilayer. Topologically, residues 295–300 (PGGAWH) are periplasmic. Residues 301 to 321 (FGFSMFCILLVVLIGGVTLWL) form a helical membrane-spanning segment. Residues 322–327 (HRSKWL) lie on the Cytoplasmic side of the membrane.

The protein belongs to the CorA metal ion transporter (MIT) (TC 1.A.35) family.

It localises to the cell inner membrane. It catalyses the reaction Zn(2+)(out) + H(+)(out) = Zn(2+)(in) + H(+)(in). In terms of biological role, zinc transporter. Acts as a Zn(2+):proton symporter, which likely mediates zinc ion uptake. The polypeptide is Zinc transport protein ZntB (Citrobacter koseri (strain ATCC BAA-895 / CDC 4225-83 / SGSC4696)).